Reading from the N-terminus, the 432-residue chain is Adenylosuccinate synthetase (432 aa).

GTP contacts are provided by residues 13-19 (GDEGKGK) and 41-43 (GHT). Residue D14 is the Proton acceptor of the active site. 2 residues coordinate Mg(2+): D14 and G41. IMP-binding positions include 14-17 (DEGK), 39-42 (NAGH), T130, R144, Q225, T240, and R304. The active-site Proton donor is the H42. Residue 300 to 306 (ATTGRRR) coordinates substrate. GTP is bound by residues R306, 332–334 (KLD), and 415–417 (STG).

The protein belongs to the adenylosuccinate synthetase family. In terms of assembly, homodimer. Mg(2+) serves as cofactor.

It localises to the cytoplasm. The enzyme catalyses IMP + L-aspartate + GTP = N(6)-(1,2-dicarboxyethyl)-AMP + GDP + phosphate + 2 H(+). Its pathway is purine metabolism; AMP biosynthesis via de novo pathway; AMP from IMP: step 1/2. In terms of biological role, plays an important role in the de novo pathway of purine nucleotide biosynthesis. Catalyzes the first committed step in the biosynthesis of AMP from IMP. The sequence is that of Adenylosuccinate synthetase from Klebsiella pneumoniae (strain 342).